The chain runs to 149 residues: Calmodulin-like protein 3 (149 aa).

4 consecutive EF-hand domains span residues 8 to 43, 44 to 79, 81 to 116, and 117 to 149; these read EQVTEFKEAFSLFDKDGDGCITTRELGTVMRSLGQN, PTEAELRDMMSEIDRDGNGTVDFPEFLGMMARKMKD, DNEEEIREAFRVFDKDGNGFVSAAELRHVMTRLGEK, and LSDEEVDEMIRAADTDGDGQVNYEEFVRVLVSK. Ca(2+) is bound by residues aspartate 21, aspartate 23, aspartate 25, cysteine 27, glutamate 32, aspartate 57, aspartate 59, asparagine 61, threonine 63, glutamate 68, aspartate 94, aspartate 96, asparagine 98, glutamate 105, aspartate 130, aspartate 132, aspartate 134, glutamine 136, and glutamate 141.

This sequence belongs to the calmodulin family. Interacts with MYO10, the interaction is calcium-dependent and essential for MYO10 function in filopodial extension. In terms of tissue distribution, expressed in normal mammary, prostate, cervical, and epidermal tissues. It is greatly reduced or undetectable in transformed cells.

Functionally, may function as a specific light chain of unconventional myosin-10 (MYO10), also enhances MYO10 translation, possibly by acting as a chaperone for the emerging MYO10 heavy chain protein. May compete with calmodulin by binding, with different affinities, to cellular substrates. The chain is Calmodulin-like protein 3 (CALML3) from Homo sapiens (Human).